The primary structure comprises 174 residues: Adipose-secreted signaling protein (174 aa).

Residue alanine 2 is modified to N-acetylalanine. Threonine 147 carries the post-translational modification Phosphothreonine.

It belongs to the ADISSP family.

It localises to the secreted. In terms of biological role, adipocyte-secreted protein (adipokine) that acts as a key regulator for white adipose tissue (WAT) thermogenesis and glucose homeostasis at least in part through activation of protein kinase A (PKA). The sequence is that of Adipose-secreted signaling protein from Bos taurus (Bovine).